The primary structure comprises 461 residues: uncharacterized protein (461 aa).

Residues 1 to 19 (MEKCSHESGRHSAENDGKY) are compositionally biased toward basic and acidic residues. Residues 1 to 21 (MEKCSHESGRHSAENDGKYDI) are disordered.

This sequence belongs to the CapA family.

Could be involved in the biosynthesis of a cell wall component. This is an uncharacterized protein from Sinorhizobium fredii (strain NBRC 101917 / NGR234).